Consider the following 198-residue polypeptide: Protein GrpE (198 aa).

Positions 1–27 (MEERNEQVVEETKEAQTEEATIEKNSE) are enriched in basic and acidic residues. The disordered stretch occupies residues 1–39 (MEERNEQVVEETKEAQTEEATIEKNSEESVTEEATEETV). The span at 29–39 (SVTEEATEETV) shows a compositional bias: acidic residues.

It belongs to the GrpE family. As to quaternary structure, homodimer.

The protein localises to the cytoplasm. Its function is as follows. Participates actively in the response to hyperosmotic and heat shock by preventing the aggregation of stress-denatured proteins, in association with DnaK and GrpE. It is the nucleotide exchange factor for DnaK and may function as a thermosensor. Unfolded proteins bind initially to DnaJ; upon interaction with the DnaJ-bound protein, DnaK hydrolyzes its bound ATP, resulting in the formation of a stable complex. GrpE releases ADP from DnaK; ATP binding to DnaK triggers the release of the substrate protein, thus completing the reaction cycle. Several rounds of ATP-dependent interactions between DnaJ, DnaK and GrpE are required for fully efficient folding. The sequence is that of Protein GrpE from Bacillus cytotoxicus (strain DSM 22905 / CIP 110041 / 391-98 / NVH 391-98).